The following is a 301-amino-acid chain: Zinc finger protein 346 (301 aa).

2 consecutive Matrin-type zinc fingers follow at residues 55 to 85 (SQCK…KVRR) and 117 to 141 (KACS…GKVH). The Zn(2+) site is built by C57, C60, H73, H79, C119, C122, H135, and H141. Positions 151–177 (GSQTPALPQPEAQAKKDDGMQGPAEQD) are disordered. 2 consecutive Matrin-type zinc fingers follow at residues 180 to 210 (RFCS…HMNK) and 230 to 257 (YPCT…HKNH). The segment at 250–283 (SGSKHKNHAKPKKGPNAFAPPPDNYQPDYQYPTN) is disordered. Residues 251–262 (GSKHKNHAKPKK) show a composition bias toward basic residues.

The protein localises to the nucleus. It localises to the cytoplasm. In terms of biological role, binds preferentially to dsRNA, but also to RNA-DNA hybrids. This chain is Zinc finger protein 346, found in Danio rerio (Zebrafish).